Reading from the N-terminus, the 569-residue chain is Glucose-6-phosphate isomerase, cytosolic 1A (569 aa).

The Proton donor role is filled by Glu-360. Residues His-391 and Lys-516 contribute to the active site.

It belongs to the GPI family. As to quaternary structure, homodimer.

The protein resides in the cytoplasm. It carries out the reaction alpha-D-glucose 6-phosphate = beta-D-fructose 6-phosphate. The protein operates within carbohydrate degradation; glycolysis; D-glyceraldehyde 3-phosphate and glycerone phosphate from D-glucose: step 2/4. The sequence is that of Glucose-6-phosphate isomerase, cytosolic 1A (PGIC1-A) from Clarkia lewisii (Farewell-to-spring).